A 230-amino-acid polypeptide reads, in one-letter code: Protein-L-isoaspartate O-methyltransferase (230 aa).

The active site involves Ser-68.

This sequence belongs to the methyltransferase superfamily. L-isoaspartyl/D-aspartyl protein methyltransferase family.

The protein resides in the cytoplasm. The enzyme catalyses [protein]-L-isoaspartate + S-adenosyl-L-methionine = [protein]-L-isoaspartate alpha-methyl ester + S-adenosyl-L-homocysteine. Catalyzes the methyl esterification of L-isoaspartyl residues in peptides and proteins that result from spontaneous decomposition of normal L-aspartyl and L-asparaginyl residues. It plays a role in the repair and/or degradation of damaged proteins. This Salinibacter ruber (strain DSM 13855 / M31) protein is Protein-L-isoaspartate O-methyltransferase.